The sequence spans 422 residues: Gamma-glutamyl phosphate reductase (422 aa).

It belongs to the gamma-glutamyl phosphate reductase family.

The protein resides in the cytoplasm. The catalysed reaction is L-glutamate 5-semialdehyde + phosphate + NADP(+) = L-glutamyl 5-phosphate + NADPH + H(+). Its pathway is amino-acid biosynthesis; L-proline biosynthesis; L-glutamate 5-semialdehyde from L-glutamate: step 2/2. Functionally, catalyzes the NADPH-dependent reduction of L-glutamate 5-phosphate into L-glutamate 5-semialdehyde and phosphate. The product spontaneously undergoes cyclization to form 1-pyrroline-5-carboxylate. In Shewanella piezotolerans (strain WP3 / JCM 13877), this protein is Gamma-glutamyl phosphate reductase.